The sequence spans 213 residues: Homeobox protein koza (213 aa).

The segment at 24 to 72 (ILSHMGPGSKEKSLGFPKTDQDQDSSLRDTEEKYASEKLQSSSQPAEIH) is disordered. Over residues 32-59 (SKEKSLGFPKTDQDQDSSLRDTEEKYAS) the composition is skewed to basic and acidic residues. Residues 102 to 161 (QKRSRAAFSHSQVIELERKFSSQKYLSAPERAQLAKSLKLTETQVKIWFQNRRYKTKRKQ) constitute a DNA-binding region (homeobox).

Belongs to the NK-3 homeobox family. As to expression, expressed in the muscle layer of embryonic somites. In tailbud embryos, expressed throughout the entire myotome but at the mid-tailbud stage (stage 32), expression becomes restricted to the outer periphery of the somite so that by the tadpole stage only the outer, type I cells show expression. Also expressed in the dorsal cement gland and in the myocardial layer of the developing heart. In all tissues, expression begins after terminal differentiation.

It localises to the nucleus. Functionally, may regulate cell proliferation in a tissue-specific manner. The sequence is that of Homeobox protein koza from Xenopus laevis (African clawed frog).